The chain runs to 317 residues: Small ribosomal subunit protein uS2 (317 aa).

The residue at position 2 (Ser-2) is an N-acetylserine. Laminin-binding stretches follow at residues Ile-161–Arg-180 and Arg-205–Gly-229. [DE]-W-[ST] repeat units follow at residues Glu-230–Ser-232, Asp-245–Ser-247, Asp-288–Ser-290, Asp-297–Ser-299, and Glu-315–Ser-317. Residues Glu-242–Ser-317 form a laminin-binding region. Positions Pro-278–Ser-317 are disordered.

Belongs to the universal ribosomal protein uS2 family. Monomer (37LRP) and homodimer (67LR). Component of the small ribosomal subunit. Mature ribosomes consist of a small (40S) and a large (60S) subunit. The 40S subunit contains about 33 different proteins and 1 molecule of RNA (18S). The 60S subunit contains about 49 different proteins and 3 molecules of RNA (28S, 5.8S and 5S). Interacts with rps21. Interacts with several laminins including at least lamb1. Interacts with mdk. Post-translationally, acylated. Acylation may be a prerequisite for conversion of the monomeric 37 kDa laminin receptor precursor (37LRP) to the mature dimeric 67 kDa laminin receptor (67LR), and may provide a mechanism for membrane association. Cleaved by stromelysin-3 (ST3) at the cell surface. Cleavage by stromelysin-3 may be a mechanism to alter cell-extracellular matrix interactions.

It localises to the cell membrane. The protein localises to the cytoplasm. Its subcellular location is the nucleus. Required for the assembly and/or stability of the 40S ribosomal subunit. Required for the processing of the 20S rRNA-precursor to mature 18S rRNA in a late step of the maturation of 40S ribosomal subunits. Also functions as a cell surface receptor for laminin. Plays a role in cell adhesion to the basement membrane and in the consequent activation of signaling transduction pathways. May play a role in cell fate determination and tissue morphogenesis. The sequence is that of Small ribosomal subunit protein uS2 (rpsa) from Ictalurus punctatus (Channel catfish).